The chain runs to 315 residues: Homoserine kinase (315 aa).

Position 97–107 (97–107) interacts with ATP; that stretch reads PPARGLGSSAT.

It belongs to the GHMP kinase family. Homoserine kinase subfamily.

It localises to the cytoplasm. It catalyses the reaction L-homoserine + ATP = O-phospho-L-homoserine + ADP + H(+). The protein operates within amino-acid biosynthesis; L-threonine biosynthesis; L-threonine from L-aspartate: step 4/5. Its function is as follows. Catalyzes the ATP-dependent phosphorylation of L-homoserine to L-homoserine phosphate. The polypeptide is Homoserine kinase (Prochlorococcus marinus (strain MIT 9312)).